Here is an 84-residue protein sequence, read N- to C-terminus: NADH-ubiquinone oxidoreductase chain 4L (84 aa).

The next 2 membrane-spanning stretches (helical) occupy residues 18–38 (IISL…KIIY) and 51–71 (FALF…SLLV).

Belongs to the complex I subunit 4L family.

Its subcellular location is the mitochondrion membrane. It carries out the reaction a ubiquinone + NADH + 5 H(+)(in) = a ubiquinol + NAD(+) + 4 H(+)(out). In terms of biological role, core subunit of the mitochondrial membrane respiratory chain NADH dehydrogenase (Complex I) that is believed to belong to the minimal assembly required for catalysis. Complex I functions in the transfer of electrons from NADH to the respiratory chain. The immediate electron acceptor for the enzyme is believed to be ubiquinone. This is NADH-ubiquinone oxidoreductase chain 4L (ND4L) from Debaryomyces hansenii (strain ATCC 36239 / CBS 767 / BCRC 21394 / JCM 1990 / NBRC 0083 / IGC 2968) (Yeast).